The following is a 62-amino-acid chain: Mu-conotoxin Lt5d (62 aa).

An N-terminal signal peptide occupies residues 1-22; it reads MRCLPVFIILLLLIPSAPSVDA. Positions 23–48 are excised as a propeptide; sequence QPTTKDDVPLASLHDNAKRALQMFWN.

This sequence belongs to the conotoxin T superfamily. In terms of processing, contains 2 disulfide bonds that can be either 'C1-C3, C2-C4' or 'C1-C4, C2-C3', since these disulfide connectivities have been observed for conotoxins with cysteine framework V (for examples, see AC P0DQQ7 and AC P81755). Expressed by the venom duct.

Its subcellular location is the secreted. Its function is as follows. Mu-conotoxins block voltage-gated sodium channels (Nav). This toxin inhibits tetrodotoxin(TTX)-sensitive sodium channels, but does not affect TTX-resistant sodium channels. Reduces the amplitude of currents without changing the activation and inactivation kinetics of currents. This Conus litteratus (Lettered cone) protein is Mu-conotoxin Lt5d.